The chain runs to 290 residues: Tubulin polyglutamylase complex subunit 1 (290 aa).

A disordered region spans residues 1–30 (MAAVEKRRQAVPPPAGFTDSGRQSVSRAAG). 2 positions are modified to phosphoserine: S34 and S266.

Part of the neuronal tubulin polyglutamylase complex which contains TPGS1, TPGS2, TTLL1, LRRC49 and NICN1. Interacts with PCM1, CSTPP1 and LRRC49.

Its subcellular location is the cytoplasm. The protein resides in the cytoskeleton. The protein localises to the cilium axoneme. It is found in the flagellum axoneme. It localises to the cilium basal body. Its subcellular location is the flagellum basal body. The protein resides in the cell projection. The protein localises to the axon. It is found in the dendrite. It localises to the microtubule organizing center. Its subcellular location is the centrosome. The protein resides in the centriolar satellite. In terms of biological role, subunit of the tubulin polyglutamylase complex (TPGC). The complex mediates cilia and flagella polyglutamylation which is essential for their biogenesis and motility. May act in the targeting of the tubulin polyglutamylase complex. Required for the development of the spermatid flagellum. In Homo sapiens (Human), this protein is Tubulin polyglutamylase complex subunit 1.